Here is a 424-residue protein sequence, read N- to C-terminus: STAM-binding protein (424 aa).

The interaction with CHMP3 stretch occupies residues 1–127 (MSDHGDVSLP…YEQYKERKKK (127 aa)). Phosphoserine is present on residues Ser-2 and Ser-48. Residues 227 to 231 (PAKPP) form an interaction with STAM region. Phosphoserine is present on Ser-243. One can recognise an MPN domain in the interval 257 to 388 (IVVPRNLCSE…LTDYGLQEIS (132 aa)). Residues His-335, His-337, Asp-348, His-350, Cys-390, His-396, and His-398 each coordinate Zn(2+). Residues 335 to 348 (HTHPTQTAFLSSVD) carry the JAMM motif motif.

This sequence belongs to the peptidase M67C family. Interacts with STAM. Interacts with SMAD6 and SMAD7. Interacts with CHMP3; the interaction appears to relieve the autoinhibition of CHMP3. Interacts with SMURF2 and RNF11; this interaction promotes ubiquitination. It depends on Zn(2+) as a cofactor. Phosphorylated after BMP type I receptor activation. Post-translationally, ubiquitinated by SMURF2 in the presence of RNF11. As to expression, expressed in brain.

It is found in the nucleus. It localises to the membrane. The protein resides in the cytoplasm. Its subcellular location is the early endosome. Inhibited by N-ethylmaleimide. Its function is as follows. Zinc metalloprotease that specifically cleaves 'Lys-63'-linked polyubiquitin chains. Does not cleave 'Lys-48'-linked polyubiquitin chains. Plays a role in signal transduction for cell growth and MYC induction mediated by IL-2 and GM-CSF. Potentiates BMP (bone morphogenetic protein) signaling by antagonizing the inhibitory action of SMAD6 and SMAD7. Has a key role in regulation of cell surface receptor-mediated endocytosis and ubiquitin-dependent sorting of receptors to lysosomes. Endosomal localization of STAMBP is required for efficient EGFR degradation but not for its internalization. Involved in the negative regulation of PI3K-AKT-mTOR and RAS-MAP signaling pathways. This is STAM-binding protein (Stambp) from Mus musculus (Mouse).